We begin with the raw amino-acid sequence, 68 residues long: Conotoxin G1.9 (68 aa).

An N-terminal signal peptide occupies residues 1–21 (MGMRMMFTVFLLVVLATTVVS). Positions 22 to 44 (FTSRRGPKSRRGEPVPTTVINYG) are excised as a propeptide. 2 cysteine pairs are disulfide-bonded: C46–C52 and C47–C61.

The protein belongs to the conotoxin A superfamily. Expressed by the venom duct.

The protein localises to the secreted. Its function is as follows. Does not show activity on all the human nAChR subtypes studied. This chain is Conotoxin G1.9, found in Conus geographus (Geography cone).